The primary structure comprises 430 residues: Histidine--tRNA ligase (430 aa).

The protein belongs to the class-II aminoacyl-tRNA synthetase family. As to quaternary structure, homodimer.

The protein localises to the cytoplasm. The enzyme catalyses tRNA(His) + L-histidine + ATP = L-histidyl-tRNA(His) + AMP + diphosphate + H(+). This Acaryochloris marina (strain MBIC 11017) protein is Histidine--tRNA ligase.